A 196-amino-acid chain; its full sequence is Glycerol-3-phosphate acyltransferase (196 aa).

The next 4 membrane-spanning stretches (helical) occupy residues 4–24, 70–90, 111–131, and 152–172; these read IYIAALVLGYLFGSIPFGLIL, VLIAAGFGGAEAAMLAALGAF, IGVLLGLFWPAALVFCVLWLA, and IFLWWFGHPTMASLFAVLTLL.

It belongs to the PlsY family. As to quaternary structure, probably interacts with PlsX.

Its subcellular location is the cell inner membrane. It carries out the reaction an acyl phosphate + sn-glycerol 3-phosphate = a 1-acyl-sn-glycero-3-phosphate + phosphate. It functions in the pathway lipid metabolism; phospholipid metabolism. Catalyzes the transfer of an acyl group from acyl-phosphate (acyl-PO(4)) to glycerol-3-phosphate (G3P) to form lysophosphatidic acid (LPA). This enzyme utilizes acyl-phosphate as fatty acyl donor, but not acyl-CoA or acyl-ACP. This is Glycerol-3-phosphate acyltransferase from Rhodopseudomonas palustris (strain BisB5).